The chain runs to 193 residues: Proton-translocating ferredoxin:NAD(+) oxidoreductase complex subunit A (193 aa).

The next 6 helical transmembrane spans lie at alanine 11–valine 31, valine 39–valine 59, phenylalanine 62–alanine 82, methionine 102–leucine 122, valine 134–leucine 154, and glycine 171–isoleucine 191.

This sequence belongs to the NqrDE/RnfAE family. The complex is composed of six subunits: RnfA, RnfB, RnfC, RnfD, RnfE and RnfG.

It is found in the cell membrane. Functionally, part of a membrane-bound complex that couples electron transfer with translocation of ions across the membrane. Couples electron transfer from reduced ferredoxin to NAD(+) with translocation of H(+) out of the cell. Essential for energy conservation during autotrophic growth. Contributes to ATP synthesis during heterotrophic growth. The protein is Proton-translocating ferredoxin:NAD(+) oxidoreductase complex subunit A of Clostridium ljungdahlii (strain ATCC 55383 / DSM 13528 / PETC).